The chain runs to 269 residues: 4-hydroxy-tetrahydrodipicolinate reductase (269 aa).

Residues 11 to 16 and E37 contribute to the NAD(+) site; that span reads GASGRM. R38 is an NADP(+) binding site. NAD(+) is bound by residues 101 to 103 and 125 to 128; these read GTT and AGNM. Residue H158 is the Proton donor/acceptor of the active site. H159 provides a ligand contact to (S)-2,3,4,5-tetrahydrodipicolinate. Catalysis depends on K162, which acts as the Proton donor. (S)-2,3,4,5-tetrahydrodipicolinate is bound at residue 168 to 169; it reads GT.

It belongs to the DapB family.

It localises to the cytoplasm. The catalysed reaction is (S)-2,3,4,5-tetrahydrodipicolinate + NAD(+) + H2O = (2S,4S)-4-hydroxy-2,3,4,5-tetrahydrodipicolinate + NADH + H(+). The enzyme catalyses (S)-2,3,4,5-tetrahydrodipicolinate + NADP(+) + H2O = (2S,4S)-4-hydroxy-2,3,4,5-tetrahydrodipicolinate + NADPH + H(+). The protein operates within amino-acid biosynthesis; L-lysine biosynthesis via DAP pathway; (S)-tetrahydrodipicolinate from L-aspartate: step 4/4. In terms of biological role, catalyzes the conversion of 4-hydroxy-tetrahydrodipicolinate (HTPA) to tetrahydrodipicolinate. This chain is 4-hydroxy-tetrahydrodipicolinate reductase, found in Ruegeria sp. (strain TM1040) (Silicibacter sp.).